The chain runs to 333 residues: Complement C1q and tumor necrosis factor-related protein 9A (333 aa).

Residues 1–19 (MRIWWLLLAIEICTGNINS) form the signal peptide. Collagen-like domains follow at residues 24 to 82 (RQGH…DGKV), 95 to 154 (GSPG…PGPM), and 155 to 191 (GPIG…GEKG). A disordered region spans residues 24–188 (RQGHPGIPGN…GIRGWKGDRG (165 aa)). The segment covering 26–40 (GHPGIPGNPGHNGLP) has biased composition (low complexity). 3 positions are modified to 4-hydroxyproline: Pro-31, Pro-34, and Pro-40. Residues 42–57 (RDGRDGAKGDKGDAGE) are compositionally biased toward basic and acidic residues. Pro-58, Pro-61, and Pro-64 each carry 4-hydroxyproline. Residues 69-88 (TSGEKGERGADGKVEAKGIK) show a composition bias toward basic and acidic residues. 2 positions are modified to 5-hydroxylysine: Lys-73 and Lys-127. O-linked (Gal...) hydroxylysine glycosylation is found at Lys-73 and Lys-127. Pro-151, Pro-160, and Pro-175 each carry 4-hydroxyproline. The C1q domain maps to 197 to 333 (LVLPKSAFTV…FTGFLLFSSP (137 aa)).

In terms of assembly, multimers (predominantly trimers). Interacts with ADIPOQ via the C1q domain to form a heterotrimeric complex. Interacts with CTRP9B. Forms heterotrimers and heterooligomeric complexes with CTRP9B. As to expression, expressed predominantly in adipose tissue.

It localises to the secreted. Its function is as follows. Probable adipokine. Activates AMPK, AKT, and p44/42 MAPK signaling pathways. The chain is Complement C1q and tumor necrosis factor-related protein 9A (C1QTNF9) from Homo sapiens (Human).